The sequence spans 189 residues: UPF0301 protein PFL_5830 (189 aa).

The protein belongs to the UPF0301 (AlgH) family.

This Pseudomonas fluorescens (strain ATCC BAA-477 / NRRL B-23932 / Pf-5) protein is UPF0301 protein PFL_5830.